We begin with the raw amino-acid sequence, 298 residues long: Aspartate carbamoyltransferase catalytic subunit (298 aa).

Residues arginine 53 and threonine 54 each coordinate carbamoyl phosphate. Lysine 81 provides a ligand contact to L-aspartate. Residues arginine 103, histidine 132, and glutamine 135 each contribute to the carbamoyl phosphate site. L-aspartate-binding residues include arginine 166 and arginine 218. Residues glycine 259 and proline 260 each contribute to the carbamoyl phosphate site.

Belongs to the aspartate/ornithine carbamoyltransferase superfamily. ATCase family. As to quaternary structure, heterododecamer (2C3:3R2) of six catalytic PyrB chains organized as two trimers (C3), and six regulatory PyrI chains organized as three dimers (R2).

It catalyses the reaction carbamoyl phosphate + L-aspartate = N-carbamoyl-L-aspartate + phosphate + H(+). It participates in pyrimidine metabolism; UMP biosynthesis via de novo pathway; (S)-dihydroorotate from bicarbonate: step 2/3. Its function is as follows. Catalyzes the condensation of carbamoyl phosphate and aspartate to form carbamoyl aspartate and inorganic phosphate, the committed step in the de novo pyrimidine nucleotide biosynthesis pathway. This is Aspartate carbamoyltransferase catalytic subunit from Anaplasma marginale (strain St. Maries).